Here is a 185-residue protein sequence, read N- to C-terminus: Ribosome-recycling factor (185 aa).

The protein belongs to the RRF family.

Its subcellular location is the cytoplasm. In terms of biological role, responsible for the release of ribosomes from messenger RNA at the termination of protein biosynthesis. May increase the efficiency of translation by recycling ribosomes from one round of translation to another. The chain is Ribosome-recycling factor from Salinispora tropica (strain ATCC BAA-916 / DSM 44818 / JCM 13857 / NBRC 105044 / CNB-440).